A 118-amino-acid chain; its full sequence is Galanin peptides (118 aa).

A signal peptide spans 1–19 (MHRCVGGVCVSLIVCAFLT). Positions 20 to 30 (ETLGMVIAAKE) are excised as a propeptide. Ala-61 carries the post-translational modification Alanine amide.

Belongs to the galanin family. In terms of tissue distribution, strongly expressed in brain and stomach, moderately in the eye, and very weakly in heart, kidney and gills. Not detected in liver.

It localises to the secreted. Its function is as follows. Endocrine hormone of the central and peripheral nervous systems that binds and activates the G protein-coupled receptors GALR1 (galr1a and galr1b) and GALR2 (galr2a and galr2b). This small neuropeptide may regulate diverse physiologic functions including contraction of smooth muscle of the gastrointestinal and genitourinary tract, growth hormone and insulin release and adrenal secretion. The chain is Galanin peptides from Danio rerio (Zebrafish).